The following is a 203-amino-acid chain: N-(5'-phosphoribosyl)anthranilate isomerase (203 aa).

Belongs to the TrpF family.

The enzyme catalyses N-(5-phospho-beta-D-ribosyl)anthranilate = 1-(2-carboxyphenylamino)-1-deoxy-D-ribulose 5-phosphate. It participates in amino-acid biosynthesis; L-tryptophan biosynthesis; L-tryptophan from chorismate: step 3/5. The protein is N-(5'-phosphoribosyl)anthranilate isomerase of Listeria innocua serovar 6a (strain ATCC BAA-680 / CLIP 11262).